We begin with the raw amino-acid sequence, 356 residues long: uncharacterized protein (356 aa).

The next 6 membrane-spanning stretches (helical) occupy residues 7–29 (LLSR…VSLY), 49–71 (YFLN…ISLI), 91–113 (ISPL…TFLL), 270–292 (LFYR…YLFF), 299–316 (QVIP…LVIL), and 329–348 (VLYS…KGVY).

It localises to the cell membrane. This is an uncharacterized protein from Aquifex aeolicus (strain VF5).